Reading from the N-terminus, the 223-residue chain is Transmembrane protein 126 (223 aa).

At 1 to 39 (MALSRAKPDELPRDAVVITEDQALKYQWKIITSWDKIGE) the chain is on the mitochondrial matrix side. A helical transmembrane segment spans residues 40–62 (VWSLRYTPGILSALAAGTGAYIN). The Mitochondrial intermembrane segment spans residues 63–78 (NHYRTKLRLGGHGRLS). Residues 79–99 (TYLPIVAVPAIFTMLAHKFFI) traverse the membrane as a helical segment. The Mitochondrial matrix portion of the chain corresponds to 100–123 (QRPILLNPLGECPVCIQMRSAAFQ). The helical transmembrane segment at 124–144 (TSLGIVYPTILAPFAAFLFAT) threads the bilayer. Residues 145-171 (RCYTYRIPSITENPREVFLLWRKFTRP) lie on the Mitochondrial intermembrane side of the membrane. A helical membrane pass occupies residues 172 to 192 (IVPALGTLIGLQALLTMFLTG). Topologically, residues 193–223 (QEDKQNFKLMLRMREIEHQVEEEHLPQRMDF) are mitochondrial matrix.

The protein belongs to the TMEM126 family. As to quaternary structure, associates with mitochondrial complex I assembly intermediates during its biogenesis.

The protein resides in the mitochondrion membrane. Functionally, as part of the MCIA complex, involved in the assembly of the mitochondrial complex I. The polypeptide is Transmembrane protein 126 (Drosophila melanogaster (Fruit fly)).